Consider the following 963-residue polypeptide: Protein bicaudal C homolog 1-A (963 aa).

The segment at M1–R48 is disordered. A compositionally biased stretch (polar residues) spans M12–E22. A compositionally biased stretch (basic and acidic residues) spans D35–R48. 2 consecutive KH domains span residues R128–I195 and P280–L344. Residues E592–S601 are compositionally biased toward polar residues. 3 disordered regions span residues E592–E613, E668–S713, and L767–A834. Basic and acidic residues-rich tracts occupy residues S602–P612 and V683–E696. The span at E784–L797 shows a compositional bias: low complexity. The span at I812–G824 shows a compositional bias: polar residues. The region spanning F862–N925 is the SAM domain.

The protein belongs to the BicC family.

Putative RNA-binding protein. May be involved in regulating gene expression during embryonic development. Seems to be involved in endoderm formation. Ectopic expression results in endoderm formation in the absence of mesoderm induction. The protein is Protein bicaudal C homolog 1-A (bicc1-a) of Xenopus laevis (African clawed frog).